Consider the following 655-residue polypeptide: Fructose-1,6-bisphosphatase class 3 (655 aa).

This sequence belongs to the FBPase class 3 family. It depends on Mn(2+) as a cofactor.

The enzyme catalyses beta-D-fructose 1,6-bisphosphate + H2O = beta-D-fructose 6-phosphate + phosphate. Its pathway is carbohydrate biosynthesis; gluconeogenesis. The chain is Fructose-1,6-bisphosphatase class 3 from Porphyromonas gingivalis (strain ATCC 33277 / DSM 20709 / CIP 103683 / JCM 12257 / NCTC 11834 / 2561).